Reading from the N-terminus, the 201-residue chain is Flavin prenyltransferase UbiX (201 aa).

Residues 23–25, Ser49, 103–106, and Arg138 each bind FMN; these read GAS and SIKT. Residues Tyr168 and Lys184 each contribute to the dimethylallyl phosphate site.

It belongs to the UbiX/PAD1 family.

The catalysed reaction is dimethylallyl phosphate + FMNH2 = prenylated FMNH2 + phosphate. In terms of biological role, flavin prenyltransferase that catalyzes the synthesis of the prenylated FMN cofactor (prenyl-FMN) for 4-hydroxy-3-polyprenylbenzoic acid decarboxylase UbiD. The prenyltransferase is metal-independent and links a dimethylallyl moiety from dimethylallyl monophosphate (DMAP) to the flavin N5 and C6 atoms of FMN. The chain is Flavin prenyltransferase UbiX from Saccharolobus solfataricus (strain ATCC 35092 / DSM 1617 / JCM 11322 / P2) (Sulfolobus solfataricus).